A 495-amino-acid chain; its full sequence is Catalase B (495 aa).

Residues 1–25 (MSNNKKLTSLFGAPVSDRENSMTAG) are disordered. Residues H55 and N128 contribute to the active site. Residue Y338 coordinates heme.

This sequence belongs to the catalase family. Homodimer. Requires heme as cofactor.

The catalysed reaction is 2 H2O2 = O2 + 2 H2O. Decomposes hydrogen peroxide into water and oxygen; serves to protect cells from the toxic effects of hydrogen peroxide. The protein is Catalase B (katB) of Staphylococcus xylosus.